We begin with the raw amino-acid sequence, 493 residues long: Alpha-amylase-related protein (493 aa).

The N-terminal stretch at 1–19 (MFKFALTQTLCLAGSLSLA) is a signal peptide. A Pyrrolidone carboxylic acid modification is found at Gln-20. Residues Cys-47 and Cys-103 are joined by a disulfide bond. Ca(2+) contacts are provided by Asn-117, Gln-168, and Asp-177. Cys-156 and Cys-170 are joined by a disulfide. Chloride is bound at residue Arg-205. The active-site Nucleophile is the Asp-207. His-211 is a binding site for Ca(2+). Glu-244 functions as the Proton donor in the catalytic mechanism. Asn-307 and Arg-342 together coordinate chloride. Cystine bridges form between Cys-375–Cys-381, Cys-417–Cys-440, and Cys-447–Cys-459.

This sequence belongs to the glycosyl hydrolase 13 family. In terms of assembly, monomer. Ca(2+) is required as a cofactor. Requires chloride as cofactor.

It is found in the secreted. The enzyme catalyses Endohydrolysis of (1-&gt;4)-alpha-D-glucosidic linkages in polysaccharides containing three or more (1-&gt;4)-alpha-linked D-glucose units.. This Drosophila mauritiana (Fruit fly) protein is Alpha-amylase-related protein (Amyrel).